The chain runs to 501 residues: ATP-dependent rRNA helicase RRP3 (501 aa).

Residues 3-44 (KIVKRKEKKANDELTSLAEKIRAKALENQKKLIEAEKEGGSE) are a coiled coil. The disordered stretch occupies residues 36-79 (EAEKEGGSESDSEEDATAEKKKVLKSKSKSTVSTQNENTNEDES). Phosphoserine is present on residues Ser43, Ser45, and Ser47. The Q motif motif lies at 81–109 (ESFSELNLVPELIQACKNLNYSKPTPIQS). The 173-residue stretch at 112–284 (IPPALEGHDI…RASLTNPVKC (173 aa)) folds into the Helicase ATP-binding domain. 125-132 (AQTGSGKT) contacts ATP. The DEAD box motif lies at 231–234 (DEAD). Residues 307–461 (LKNTYLIYLL…NIILTLRDSV (155 aa)) enclose the Helicase C-terminal domain. Residues 480 to 501 (IARGKGRRGRMMTRENMDMGER) form a disordered region. Over residues 491 to 501 (MTRENMDMGER) the composition is skewed to basic and acidic residues.

The protein belongs to the DEAD box helicase family. DDX47/RRP3 subfamily. As to quaternary structure, interacts with the SSU processome.

The protein resides in the nucleus. It catalyses the reaction ATP + H2O = ADP + phosphate + H(+). Its activity is regulated as follows. ATPase activity is stimulated upon the addition of RNA. Functionally, ATP-dependent rRNA helicase required for pre-ribosomal RNA processing. Involved in the maturation of the 35S-pre-rRNA and to its cleavage to mature 18S rRNA. This Saccharomyces cerevisiae (strain ATCC 204508 / S288c) (Baker's yeast) protein is ATP-dependent rRNA helicase RRP3.